The following is a 217-amino-acid chain: Probable transaldolase (217 aa).

Lys-83 acts as the Schiff-base intermediate with substrate in catalysis.

This sequence belongs to the transaldolase family. Type 3B subfamily.

Its subcellular location is the cytoplasm. It carries out the reaction D-sedoheptulose 7-phosphate + D-glyceraldehyde 3-phosphate = D-erythrose 4-phosphate + beta-D-fructose 6-phosphate. Its pathway is carbohydrate degradation; pentose phosphate pathway; D-glyceraldehyde 3-phosphate and beta-D-fructose 6-phosphate from D-ribose 5-phosphate and D-xylulose 5-phosphate (non-oxidative stage): step 2/3. Transaldolase is important for the balance of metabolites in the pentose-phosphate pathway. The sequence is that of Probable transaldolase from Clostridium botulinum (strain Hall / ATCC 3502 / NCTC 13319 / Type A).